The following is an 85-amino-acid chain: Probable small nuclear ribonucleoprotein G (85 aa).

A Sm domain is found at 6–78; it reads QADPDLTKLL…ILLMEPLESM (73 aa).

The protein belongs to the snRNP Sm proteins family. As to quaternary structure, core component of the spliceosomal U1, U2, U4 and U5 small nuclear ribonucleoproteins (snRNPs), the building blocks of the spliceosome. Most spliceosomal snRNPs contain a common set of Sm proteins, SNRPB, SNRPD1, SNRPD2, SNRPD3, SNRPE, SNRPF and SNRPG that assemble in a heptameric protein ring on the Sm site of the small nuclear RNA to form the core snRNP. Component of the U1 snRNP. Component of the U4/U6-U5 tri-snRNP complex. Component of the U7 snRNP complex. Component of the U11/U12 snRNPs that are part of the U12-type spliceosome.

Its subcellular location is the cytoplasm. The protein resides in the cytosol. It is found in the nucleus. In terms of biological role, plays a role in pre-mRNA splicing as a core component of the spliceosomal U1, U2, U4 and U5 small nuclear ribonucleoproteins (snRNPs), the building blocks of the spliceosome. Component of both the pre-catalytic spliceosome B complex and activated spliceosome C complexes. Is also a component of the minor U12 spliceosome. This Dictyostelium discoideum (Social amoeba) protein is Probable small nuclear ribonucleoprotein G (snrpG).